We begin with the raw amino-acid sequence, 24 residues long: Small ribosomal subunit protein uS19 (24 aa).

Residues Lys-1–Lys-24 form a disordered region. Positions Tyr-11–Lys-24 are enriched in basic residues.

This sequence belongs to the universal ribosomal protein uS19 family.

Protein S19 forms a complex with S13 that binds strongly to the 16S ribosomal RNA. The protein is Small ribosomal subunit protein uS19 of Phytoplasma sp. (strain STRAWB2).